Consider the following 576-residue polypeptide: Glucoamylase ARB_02327-1 (576 aa).

The N-terminal stretch at 1–20 (MGLASTVSLALLGLCSLARA) is a signal peptide. Tryptophan 141 contributes to the substrate binding site. Asparagine 168 and asparagine 192 each carry an N-linked (GlcNAc...) asparagine glycan. Aspartate 197 acts as the Proton acceptor in catalysis. The Proton donor role is filled by glutamate 200. Disulfide bonds link cysteine 243-cysteine 470 and cysteine 285-cysteine 293. One can recognise a CBM20 domain in the interval 477-576 (GSGGDTVAVT…GSFTQNDTWR (100 aa)). The segment at 552–576 (TWESDPNRSITTSASGSFTQNDTWR) is disordered. 2 N-linked (GlcNAc...) asparagine glycosylation sites follow: asparagine 558 and asparagine 572.

Belongs to the glycosyl hydrolase 15 family.

The protein localises to the secreted. The catalysed reaction is Hydrolysis of terminal (1-&gt;4)-linked alpha-D-glucose residues successively from non-reducing ends of the chains with release of beta-D-glucose.. This chain is Glucoamylase ARB_02327-1, found in Schizophyllum commune (strain H4-8 / FGSC 9210) (Split gill fungus).